A 334-amino-acid chain; its full sequence is Stabilizer of axonemal microtubules 3 (334 aa).

Disordered regions lie at residues 81–105, 128–153, and 233–260; these read AYVPKTHGGPCAQPRAPEPADPTRT, YQSSETRAQYTGSPSGDPRAPEYFGP, and QVWSHGPQRPPCPRSSRPPRPPRVRVPR. The span at 128–141 shows a compositional bias: polar residues; sequence YQSSETRAQYTGSP. A compositionally biased stretch (pro residues) spans 240-251; sequence QRPPCPRSSRPP.

In Homo sapiens (Human), this protein is Stabilizer of axonemal microtubules 3.